Consider the following 334-residue polypeptide: Petrobactin import system permease protein FatD (334 aa).

The next 9 membrane-spanning stretches (helical) occupy residues 24–44 (FIIAIIVVIILGIISLFTGVY), 64–84 (TVALMLTGAAMAMAGLVMQLI), 98–118 (IEWSSLGLLFVYLLFPAPTLV), 119–139 (QRMTGAIIFSFIGTMIFFLFL), 152–172 (IIGLMLGAVISAVSTFLGLLF), 197–217 (LWLIVIVTLLIFMYANRLTLA), 234–254 (IVLFGTALISVAVGIVAAVIG), 277–297 (SNLPWVCVIGMGTITACDIIS), and 304–324 (FELPVSLILASVGAVVFITIL).

The protein belongs to the binding-protein-dependent transport system permease family. FecCD subfamily. As to quaternary structure, the complex is composed of two ATP-binding proteins (FatE), two transmembrane proteins (FatC and FatD) and a solute-binding protein (FpuA).

The protein localises to the cell membrane. Part of an ABC transporter complex involved in ferric-petrobactin uptake. Probably responsible for the translocation of the substrate across the membrane. The polypeptide is Petrobactin import system permease protein FatD (Bacillus anthracis).